A 106-amino-acid chain; its full sequence is Replication restart protein PriB (106 aa).

Positions 4–103 constitute an SSB domain; sequence MNRLVLSGTV…LHAEQIELID (100 aa).

The protein belongs to the PriB family. In terms of assembly, homodimer. Interacts with PriA and DnaT. Component of the replication restart primosome. Primosome assembly occurs via a 'hand-off' mechanism. PriA binds to replication forks, subsequently PriB then DnaT bind; DnaT then displaces ssDNA to generate the helicase loading substrate.

In terms of biological role, involved in the restart of stalled replication forks, which reloads the replicative helicase on sites other than the origin of replication; the PriA-PriB pathway is the major replication restart pathway. During primosome assembly it facilitates complex formation between PriA and DnaT on DNA; stabilizes PriA on DNA. Stimulates the DNA unwinding activity of PriA helicase. The chain is Replication restart protein PriB from Pectobacterium atrosepticum (strain SCRI 1043 / ATCC BAA-672) (Erwinia carotovora subsp. atroseptica).